The sequence spans 997 residues: DNA polymerase I (997 aa).

The 88-residue stretch at 174 to 261 folds into the 5'-3' exonuclease domain; it reads VMPTQLLDLF…VPCVFSLEDS (88 aa). Residues 428-589 enclose the 3'-5' exonuclease domain; that stretch reads VPDVSLHTES…LYHYLKLRLE (162 aa).

The protein belongs to the DNA polymerase type-A family.

It carries out the reaction DNA(n) + a 2'-deoxyribonucleoside 5'-triphosphate = DNA(n+1) + diphosphate. Functionally, in addition to polymerase activity, this DNA polymerase exhibits 3'-5' and 5'-3' exonuclease activity. The chain is DNA polymerase I (polA) from Treponema pallidum (strain Nichols).